Here is a 227-residue protein sequence, read N- to C-terminus: ATP-dependent dethiobiotin synthetase BioD (227 aa).

An ATP-binding site is contributed by 13–18 (DAGKTT). Thr17 is a binding site for Mg(2+). The active site involves Lys38. ATP-binding positions include Asp55, 118-121 (EGAG), 178-179 (NR), 207-209 (PYI), and Glu214. 2 residues coordinate Mg(2+): Asp55 and Glu118.

It belongs to the dethiobiotin synthetase family. In terms of assembly, homodimer. The cofactor is Mg(2+).

Its subcellular location is the cytoplasm. The enzyme catalyses (7R,8S)-7,8-diammoniononanoate + CO2 + ATP = (4R,5S)-dethiobiotin + ADP + phosphate + 3 H(+). Its pathway is cofactor biosynthesis; biotin biosynthesis; biotin from 7,8-diaminononanoate: step 1/2. Its function is as follows. Catalyzes a mechanistically unusual reaction, the ATP-dependent insertion of CO2 between the N7 and N8 nitrogen atoms of 7,8-diaminopelargonic acid (DAPA, also called 7,8-diammoniononanoate) to form a ureido ring. The protein is ATP-dependent dethiobiotin synthetase BioD of Tolumonas auensis (strain DSM 9187 / NBRC 110442 / TA 4).